A 192-amino-acid polypeptide reads, in one-letter code: Erythropoietin (192 aa).

The first 26 residues, 1-26, serve as a signal peptide directing secretion; that stretch reads MGVPDCLALPLLVTFLLLSLGLPVLG. Cys33 and Cys187 are joined by a disulfide. Residues Asn50, Asn64, and Asn109 are each glycosylated (N-linked (GlcNAc...) asparagine).

It belongs to the EPO/TPO family.

Its subcellular location is the secreted. Functionally, hormone involved in the regulation of erythrocyte proliferation and differentiation and the maintenance of a physiological level of circulating erythrocyte mass. Binds to EPOR leading to EPOR dimerization and JAK2 activation thereby activating specific downstream effectors, including STAT1 and STAT3. This Nannospalax galili (Northern Israeli blind subterranean mole rat) protein is Erythropoietin (EPO).